Here is a 448-residue protein sequence, read N- to C-terminus: Keratin, type I cytoskeletal 27 (448 aa).

The segment at 1–73 (MSVRFSSASR…ANEHGLLSGN (73 aa)) is head. Residues 74 to 109 (EKVTMQNLNDRLASYLENVQALEEANADLEQKIKDW) are coil 1A. In terms of domain architecture, IF rod spans 74–389 (EKVTMQNLND…RLIDGDEGSC (316 aa)). The tract at residues 110-131 (YEKFGPGSCRGLDHDYSRYFPI) is linker 1. The coil 1B stretch occupies residues 132–223 (IDDLRTQIIS…KNHEEEMQAL (92 aa)). The linker 12 stretch occupies residues 224–246 (QCAAGGNVNVEMNAAPGVDLTVL). The segment at 247–385 (LNNMRAEYEA…ETYCRLIDGD (139 aa)) is coil 2. The tract at residues 386–448 (EGSCVKAKGQ…VNKTEQRIPS (63 aa)) is tail. The disordered stretch occupies residues 427-448 (SRVHTLEEKSTKVNKTEQRIPS). Positions 430 to 448 (HTLEEKSTKVNKTEQRIPS) are enriched in basic and acidic residues.

Belongs to the intermediate filament family. As to quaternary structure, heterotetramer of two type I and two type II keratins. Interacts with KRT6A to form filaments. As to expression, expressed in skin. Expressed in the Henle layer and cuticle of the irs in hair follicle bulb. In the hair follicle, expression was observed in all layers of the irs but was stronger in the Henle layer and cuticle than the Huxley layer until the Henle layer differentiated (at protein level).

The protein localises to the cytoplasm. Its function is as follows. Essential for the proper assembly of type I and type II keratin protein complexes and formation of keratin intermediate filaments in the inner root sheath (irs). This chain is Keratin, type I cytoskeletal 27, found in Mus musculus (Mouse).